Here is a 471-residue protein sequence, read N- to C-terminus: Protoheme IX farnesyltransferase, mitochondrial (471 aa).

The transit peptide at 1–60 (MLLSNVAVNRTVVHTQLVSGSRSALHALSRTSHSVPVTHTHQRRHIFSHKRRLSSSTLAI) directs the protein to the mitochondrion. A run of 6 helical transmembrane segments spans residues 188-208 (AVSL…SGSA), 247-267 (ITGT…VAIL), 287-307 (IINT…GWAA), 312-332 (LLHP…FPHF), 368-388 (LLMF…WWFV), and 430-450 (KLFW…MIHK).

The protein belongs to the UbiA prenyltransferase family.

The protein resides in the mitochondrion membrane. The enzyme catalyses heme b + (2E,6E)-farnesyl diphosphate + H2O = Fe(II)-heme o + diphosphate. Functionally, converts protoheme IX and farnesyl diphosphate to heme O. This Yarrowia lipolytica (strain CLIB 122 / E 150) (Yeast) protein is Protoheme IX farnesyltransferase, mitochondrial (COX10).